A 468-amino-acid polypeptide reads, in one-letter code: Peroxisome proliferator-activated receptor alpha (468 aa).

The segment at residues 99-173 is a DNA-binding region (nuclear receptor); that stretch reads NIECRICGDK…VGMSHNAIRF (75 aa). 2 consecutive NR C4-type zinc fingers follow at residues 102–122 and 139–161; these read CRIC…CEGC and CDRS…FHKC. The 228-residue stretch at 239–466 folds into the NR LBD domain; sequence FVIHDMETLC…HPLLQEIYRD (228 aa). A required for heterodimerization with RXRA region spans residues 304–433; sequence DQVTLLKYGV…PKLLQKMVDL (130 aa).

The protein belongs to the nuclear hormone receptor family. NR1 subfamily. Heterodimer; with RXRA. This heterodimerization is required for DNA binding and transactivation activity. Interacts with NCOA3 coactivator. Interacts with CITED2; the interaction stimulates its transcriptional activity. Also interacts with PPARBP in vitro. Interacts with AKAP13, LPIN1, PRDM16 and coactivator NCOA6. Interacts with ASXL1 and ASXL2. Interacts with PER2. Interacts with SIRT1; the interaction seems to be modulated by NAD(+) levels. Interacts with CRY1 and CRY2. In hepatocytes, interacts with PAQR3 and HUWE1; the interactions promote PPARA poylubiquitination and HUWE1-mediated degradation. In terms of processing, ubiquitinated by E3 ubiquitin-protein ligase HUWE1; leading to proteasomal degradation. Phosphorylated. As to expression, highly expressed in liver, kidney and heart. Very weakly expressed in brain and testis.

It is found in the nucleus. Its function is as follows. Ligand-activated transcription factor. Key regulator of lipid metabolism. Activated by the endogenous ligand 1-palmitoyl-2-oleoyl-sn-glycerol-3-phosphocholine (16:0/18:1-GPC). Activated by oleylethanolamide, a naturally occurring lipid that regulates satiety. Receptor for peroxisome proliferators such as hypolipidemic drugs and fatty acids. Regulates the peroxisomal beta-oxidation pathway of fatty acids. Functions as a transcription activator for the ACOX1 and P450 genes. Transactivation activity requires heterodimerization with RXRA and is antagonized by NR2C2. May be required for the propagation of clock information to metabolic pathways regulated by PER2. This is Peroxisome proliferator-activated receptor alpha (Ppara) from Mus musculus (Mouse).